The sequence spans 214 residues: Ion-translocating oxidoreductase complex subunit G (214 aa).

A helical membrane pass occupies residues 13–33 (ALLLGLFALVGVGLVALVQQF). T180 bears the FMN phosphoryl threonine mark.

It belongs to the RnfG family. As to quaternary structure, the complex is composed of six subunits: RnfA, RnfB, RnfC, RnfD, RnfE and RnfG. It depends on FMN as a cofactor.

The protein resides in the cell inner membrane. In terms of biological role, part of a membrane-bound complex that couples electron transfer with translocation of ions across the membrane. This Pseudomonas aeruginosa (strain UCBPP-PA14) protein is Ion-translocating oxidoreductase complex subunit G.